A 102-amino-acid chain; its full sequence is Putative pterin-4-alpha-carbinolamine dehydratase (102 aa).

It belongs to the pterin-4-alpha-carbinolamine dehydratase family.

It carries out the reaction (4aS,6R)-4a-hydroxy-L-erythro-5,6,7,8-tetrahydrobiopterin = (6R)-L-erythro-6,7-dihydrobiopterin + H2O. The polypeptide is Putative pterin-4-alpha-carbinolamine dehydratase (Burkholderia ambifaria (strain ATCC BAA-244 / DSM 16087 / CCUG 44356 / LMG 19182 / AMMD) (Burkholderia cepacia (strain AMMD))).